The sequence spans 207 residues: Large ribosomal subunit protein uL4 (207 aa).

The segment at 47–78 (GTHKVKNRSEVRGGGRKPWRQKGTGRARQGSI) is disordered. The span at 60 to 71 (GGRKPWRQKGTG) shows a compositional bias: basic residues.

It belongs to the universal ribosomal protein uL4 family. As to quaternary structure, part of the 50S ribosomal subunit.

Functionally, one of the primary rRNA binding proteins, this protein initially binds near the 5'-end of the 23S rRNA. It is important during the early stages of 50S assembly. It makes multiple contacts with different domains of the 23S rRNA in the assembled 50S subunit and ribosome. In terms of biological role, forms part of the polypeptide exit tunnel. The chain is Large ribosomal subunit protein uL4 from Listeria innocua serovar 6a (strain ATCC BAA-680 / CLIP 11262).